The primary structure comprises 365 residues: Coxsackievirus and adenovirus receptor homolog (365 aa).

The N-terminal stretch at 1-19 (MALLLCFVLLCGVADFTSS) is a signal peptide. Ig-like C2-type domains are found at residues 20–136 (LSIT…FLLT) and 141–228 (PSGT…LRLD). The Extracellular segment spans residues 20–238 (LSITTPEQRI…VVPPSNRAGT (219 aa)). 3 cysteine pairs are disulfide-bonded: cysteine 41–cysteine 120, cysteine 146–cysteine 223, and cysteine 162–cysteine 212. Residue asparagine 106 is glycosylated (N-linked (GlcNAc...) asparagine). Residues 239–259 (IAGAVIGTLLALVLIGAILFC) traverse the membrane as a helical segment. Residues cysteine 259 and cysteine 260 are each lipidated (S-palmitoyl cysteine). Residues 260–365 (CHKKRREEKY…PAQSKDGSIV (106 aa)) are Cytoplasmic-facing. Residues 269 to 282 (YEKEVHHDIREDVP) are compositionally biased toward basic and acidic residues. The segment at 269 to 315 (YEKEVHHDIREDVPPPKSRTSTARSYIGSNHSSLGSMSPSNMEGYSK) is disordered. Polar residues predominate over residues 286 to 315 (SRTSTARSYIGSNHSSLGSMSPSNMEGYSK). Residues serine 297, serine 304, serine 306, serine 323, serine 332, and serine 363 each carry the phosphoserine modification. Positions 360–365 (KDGSIV) match the PDZ-binding motif.

In terms of assembly, monomer. May form homodimer. Interacts with LNX, MAGI1, DLG4, PRKCABP, TJP1 and CTNNB1. Interacts with MPDZ; recruits MPDZ to intercellular contact sites. Interacts with JAML (homodimeric form). Post-translationally, N-glycosylated. Palmitoylated on Cys-259 and/or Cys-260; required for proper localization to the plasma membrane. As to expression, expressed in heart, brain, spleen, lung, liver, muscle, kidney, testis, spleen and skeletal muscle.

It localises to the cell membrane. Its subcellular location is the basolateral cell membrane. It is found in the cell junction. The protein resides in the tight junction. The protein localises to the adherens junction. Component of the epithelial apical junction complex that may function as a homophilic cell adhesion molecule and is essential for tight junction integrity. Also involved in transepithelial migration of leukocytes through adhesive interactions with JAML a transmembrane protein of the plasma membrane of leukocytes. The interaction between both receptors also mediates the activation of gamma-delta T-cells, a subpopulation of T-cells residing in epithelia and involved in tissue homeostasis and repair. Upon epithelial CXADR-binding, JAML induces downstream cell signaling events in gamma-delta T-cells through PI3-kinase and MAP kinases. It results in proliferation and production of cytokines and growth factors by T-cells that in turn stimulate epithelial tissues repair. In Rattus norvegicus (Rat), this protein is Coxsackievirus and adenovirus receptor homolog (Cxadr).